A 180-amino-acid polypeptide reads, in one-letter code: Sec-independent protein translocase protein TatB (180 aa).

The helical transmembrane segment at 1–21 (MFDIGWSELLVIGVVALIAIG) threads the bilayer. A disordered region spans residues 95–180 (IEGVDKPVES…AERLKDAKAS (86 aa)). The segment covering 103 to 123 (ESQPAASAAPETSATVEAPAT) has biased composition (low complexity). Over residues 170-180 (EAERLKDAKAS) the composition is skewed to basic and acidic residues.

Belongs to the TatB family. In terms of assembly, the Tat system comprises two distinct complexes: a TatABC complex, containing multiple copies of TatA, TatB and TatC subunits, and a separate TatA complex, containing only TatA subunits. Substrates initially bind to the TatABC complex, which probably triggers association of the separate TatA complex to form the active translocon.

It localises to the cell inner membrane. Its function is as follows. Part of the twin-arginine translocation (Tat) system that transports large folded proteins containing a characteristic twin-arginine motif in their signal peptide across membranes. Together with TatC, TatB is part of a receptor directly interacting with Tat signal peptides. TatB may form an oligomeric binding site that transiently accommodates folded Tat precursor proteins before their translocation. The chain is Sec-independent protein translocase protein TatB from Bradyrhizobium sp. (strain BTAi1 / ATCC BAA-1182).